The sequence spans 348 residues: Uroporphyrinogen decarboxylase (348 aa).

Residues 27–31 (RQAGR), phenylalanine 46, aspartate 76, tyrosine 152, serine 207, and histidine 320 each bind substrate.

This sequence belongs to the uroporphyrinogen decarboxylase family. As to quaternary structure, homodimer.

The protein resides in the cytoplasm. The enzyme catalyses uroporphyrinogen III + 4 H(+) = coproporphyrinogen III + 4 CO2. It functions in the pathway porphyrin-containing compound metabolism; protoporphyrin-IX biosynthesis; coproporphyrinogen-III from 5-aminolevulinate: step 4/4. In terms of biological role, catalyzes the decarboxylation of four acetate groups of uroporphyrinogen-III to yield coproporphyrinogen-III. The protein is Uroporphyrinogen decarboxylase of Bacillus cereus (strain B4264).